Consider the following 197-residue polypeptide: Large ribosomal subunit protein bL17 (197 aa).

The tract at residues 136-197 is disordered; it reads RAAKKADAPQ…DAEKSSDTEK (62 aa). Acidic residues predominate over residues 148-187; it reads VADEATDADESVEDEAPAQDDSADEVEAAADETPADDAEA. Basic and acidic residues predominate over residues 188 to 197; that stretch reads DAEKSSDTEK.

This sequence belongs to the bacterial ribosomal protein bL17 family. Part of the 50S ribosomal subunit. Contacts protein L32.

The polypeptide is Large ribosomal subunit protein bL17 (Beutenbergia cavernae (strain ATCC BAA-8 / DSM 12333 / CCUG 43141 / JCM 11478 / NBRC 16432 / NCIMB 13614 / HKI 0122)).